We begin with the raw amino-acid sequence, 33 residues long: GLWSTIKQKGKEAAIAAAKAAGKAVLNAASEAL.

Leucine 33 carries the leucine amide modification.

Expressed by the skin glands.

The protein localises to the secreted. Its function is as follows. Has antimicrobial activity. This is Dermaseptin-H6 from Pithecopus hypochondrialis (Orange-legged leaf frog).